Consider the following 309-residue polypeptide: Probable cell division protein kinase ECU11_1290 (309 aa).

The Protein kinase domain maps to 4 to 288 (YENIKQVGEG…VISSHKNTYI (285 aa)). ATP contacts are provided by residues 10-18 (VGEGAFGQV) and Lys-33. Catalysis depends on Asp-124, which acts as the Proton acceptor.

Belongs to the protein kinase superfamily. CMGC Ser/Thr protein kinase family. CDC2/CDKX subfamily.

It is found in the nucleus. The catalysed reaction is L-seryl-[protein] + ATP = O-phospho-L-seryl-[protein] + ADP + H(+). It catalyses the reaction L-threonyl-[protein] + ATP = O-phospho-L-threonyl-[protein] + ADP + H(+). In terms of biological role, may play a role in the control of the eukaryotic cell cycle. The protein is Probable cell division protein kinase ECU11_1290 of Encephalitozoon cuniculi (strain GB-M1) (Microsporidian parasite).